Here is a 514-residue protein sequence, read N- to C-terminus: 3-octaprenyl-4-hydroxybenzoate carboxy-lyase (514 aa).

Residue asparagine 177 participates in Mn(2+) binding. Residues 180–182 (IYR), 194–196 (RWL), and 199–200 (RG) each bind prenylated FMN. Position 243 (glutamate 243) interacts with Mn(2+). The active-site Proton donor is the aspartate 314.

Belongs to the UbiD family. Homohexamer. The cofactor is prenylated FMN. Mn(2+) is required as a cofactor.

Its subcellular location is the cell membrane. The enzyme catalyses a 4-hydroxy-3-(all-trans-polyprenyl)benzoate + H(+) = a 2-(all-trans-polyprenyl)phenol + CO2. It participates in cofactor biosynthesis; ubiquinone biosynthesis. Catalyzes the decarboxylation of 3-octaprenyl-4-hydroxy benzoate to 2-octaprenylphenol, an intermediate step in ubiquinone biosynthesis. This Bordetella petrii (strain ATCC BAA-461 / DSM 12804 / CCUG 43448) protein is 3-octaprenyl-4-hydroxybenzoate carboxy-lyase.